A 67-amino-acid polypeptide reads, in one-letter code: Large ribosomal subunit protein bL32 (67 aa).

Basic residues predominate over residues 1 to 20 (MAVPKRKMSRSNTRARRAKW). Residues 1 to 24 (MAVPKRKMSRSNTRARRAKWKATA) are disordered.

The protein belongs to the bacterial ribosomal protein bL32 family.

The protein is Large ribosomal subunit protein bL32 of Renibacterium salmoninarum (strain ATCC 33209 / DSM 20767 / JCM 11484 / NBRC 15589 / NCIMB 2235).